The primary structure comprises 449 residues: Heterogeneous nuclear ribonucleoprotein H2 (449 aa).

N-acetylmethionine is present on Met1. At Met2 the chain carries N-acetylmethionine; in Heterogeneous nuclear ribonucleoprotein H2, N-terminally processed. Residues 11-90 form the RRM 1 domain; the sequence is FVVKVRGLPW…RYVEVFKSNS (80 aa). Ser23 carries the post-translational modification Phosphoserine. Lys35 is covalently cross-linked (Glycyl lysine isopeptide (Lys-Gly) (interchain with G-Cter in SUMO2)). Ser54 and Ser63 each carry phosphoserine. Lys87 is covalently cross-linked (Glycyl lysine isopeptide (Lys-Gly) (interchain with G-Cter in SUMO2)). Position 90 is a phosphoserine (Ser90). Lys98 is covalently cross-linked (Glycyl lysine isopeptide (Lys-Gly) (interchain with G-Cter in SUMO2)). The RRM 2 domain maps to 111–188; sequence GFVRLRGLPF…RYIEIFKSSR (78 aa). Dimethylated arginine; alternate is present on Arg233. Arg233 is subject to Omega-N-methylarginine; alternate. One copy of the 1-1 repeat lies at 234–249; it reads GAYGGGYGGYDDYGGY. The 2 X 16 AA Gly-rich approximate repeats stretch occupies residues 234 to 433; it reads GAYGGGYGGY…YGGQSSMSGY (200 aa). The residue at position 246 (Tyr246) is a Phosphotyrosine. Positions 289-364 constitute an RRM 3 domain; it reads HCVHMRGLPY…RYVELFLNST (76 aa). Ser310 carries the post-translational modification Phosphoserine. 3 consecutive repeat copies span residues 354–372, 374–392, and 418–433. Positions 354 to 392 are 2 X 19 AA perfect repeats; sequence HRYVELFLNSTAGTSGGAYDHSYVELFLNSTAGASGGAY.

In terms of assembly, component of a ribonucleoprotein complex containing mRNAs and RNA-binding proteins including DDX5, HNRNPH2 and SRSF1 as well as splicing regulator ARVCF. Interacts with TXNL4/DIM1.

The protein resides in the nucleus. Its subcellular location is the nucleoplasm. This protein is a component of the heterogeneous nuclear ribonucleoprotein (hnRNP) complexes which provide the substrate for the processing events that pre-mRNAs undergo before becoming functional, translatable mRNAs in the cytoplasm. Binds poly(RG). This chain is Heterogeneous nuclear ribonucleoprotein H2 (Hnrnph2), found in Rattus norvegicus (Rat).